Here is an 84-residue protein sequence, read N- to C-terminus: Small ribosomal subunit protein uS17 (84 aa).

Belongs to the universal ribosomal protein uS17 family. Part of the 30S ribosomal subunit.

Its function is as follows. One of the primary rRNA binding proteins, it binds specifically to the 5'-end of 16S ribosomal RNA. The protein is Small ribosomal subunit protein uS17 of Clostridium perfringens (strain SM101 / Type A).